Consider the following 243-residue polypeptide: Glucosamine-6-phosphate deaminase (243 aa).

The active-site Proton acceptor; for enolization step is the D67. N137 serves as the catalytic For ring-opening step. Catalysis depends on H139, which acts as the Proton acceptor; for ring-opening step. E144 acts as the For ring-opening step in catalysis.

It belongs to the glucosamine/galactosamine-6-phosphate isomerase family. NagB subfamily.

It catalyses the reaction alpha-D-glucosamine 6-phosphate + H2O = beta-D-fructose 6-phosphate + NH4(+). Its pathway is amino-sugar metabolism; N-acetylneuraminate degradation; D-fructose 6-phosphate from N-acetylneuraminate: step 5/5. Its function is as follows. Catalyzes the reversible isomerization-deamination of glucosamine 6-phosphate (GlcN6P) to form fructose 6-phosphate (Fru6P) and ammonium ion. This Staphylococcus epidermidis (strain ATCC 12228 / FDA PCI 1200) protein is Glucosamine-6-phosphate deaminase.